The sequence spans 225 residues: Myelin-associated neurite-outgrowth inhibitor (225 aa).

Over 1 to 58 (MNPVYSPGSSGVPYANAKGIGYPAGFPMGYAAAAPAYSPNMYAGPNPAFQQELEHPAH) the chain is Cytoplasmic. Residues 59–75 (VSSGVQMFMFGHAFSVA) form a helical membrane-spanning segment. The Extracellular portion of the chain corresponds to 76–173 (RNGAIPSGYT…PAPIQSPRGN (98 aa)). A helical membrane pass occupies residues 174 to 193 (GVAMGMVAGTTMAMSAGTLL). Over 194 to 225 (TSHYPSPVAPQVTMPTYRPPGTPTYSYVPPQW) the chain is Cytoplasmic.

Belongs to the FAM168 family.

Its subcellular location is the cytoplasm. It localises to the perinuclear region. The protein resides in the cell membrane. The protein localises to the cell projection. It is found in the axon. Functionally, inhibitor of neuronal axonal outgrowth. The protein is Myelin-associated neurite-outgrowth inhibitor (fam168b) of Xenopus laevis (African clawed frog).